A 64-amino-acid polypeptide reads, in one-letter code: Small ribosomal subunit protein bS18c (64 aa).

It belongs to the bacterial ribosomal protein bS18 family. In terms of assembly, part of the 30S ribosomal subunit.

It is found in the plastid. Its subcellular location is the chloroplast. This Bigelowiella natans (Pedinomonas minutissima) protein is Small ribosomal subunit protein bS18c (rps18).